Reading from the N-terminus, the 489-residue chain is Tripartite motif-containing protein 10 (489 aa).

Residues 16–61 (CPVCQGTLREPVTIDCGHNFCRVCLTRYLEITSPDPEEPPTCPLCK) form an RING-type zinc finger. A B box-type zinc finger spans residues 94–135 (DEEDVCPEHGEKVYFFCEDDEMQLCVVCREAWEHRAHTVRFL). Cys-99, His-102, Cys-121, and His-127 together coordinate Zn(2+). Residues 142–245 (YREQIQKCLE…IEELEEKKER (104 aa)) are a coiled coil. Residues 292–486 (REMKMFLEKL…FSLSSQEGAA (195 aa)) enclose the B30.2/SPRY domain.

It belongs to the TRIM/RBCC family. As to quaternary structure, interacts with IFNAR1; this interaction prevents association of IFNAR1 with TYK2.

The protein resides in the cytoplasm. Functionally, E3 ligase that plays an essential role in the differentiation and survival of terminal erythroid cells. May directly bind to PTEN and promote its ubiquitination, resulting in its proteasomal degradation and activation of hypertrophic signaling. In addition, plays a role in immune response regulation by repressing the phosphorylation of STAT1 and STAT2 in the interferon/JAK/STAT signaling pathway independent of its E3 ligase activity. Mechanistically, interacts with the intracellular domain of IFNAR1 and thereby inhibits the association between TYK2 and IFNAR1. The polypeptide is Tripartite motif-containing protein 10 (TRIM10) (Bos taurus (Bovine)).